Reading from the N-terminus, the 424-residue chain is Sulfatase ppz1 (424 aa).

Aspartate 13, aspartate 203, and asparagine 204 together coordinate Ca(2+).

The protein belongs to the sulfatase family. The cofactor is Ca(2+).

Sulfatase; part of the gene cluster that mediates the biosynthesis of pyrrolopyrazines, secondary metabolites showing insecticidal activity. The role of ppz1 within the pathway has still to be determined. The single multifunctional NRPS ppzA is sufficient to produce peramine via condensation of 1-pyrroline-5-carboxylate and arginine, N-methylation of the alpha-amino group of arginine and reduction of the thioester and the cyclization to form an iminium ion resulting in release from the peptide synthetase. Deprotonation of this intermediate and oxidation of the pyrroline ring would give rise to peramine. In Epichloe species that produce only peramine, the peramine synthetase gene is not localized in a gene cluster, in contrast to Metarhizium species that contain additional pyrrolopyrazine biosynthesis genes. The 2-oxoglutarate-Fe(II) type oxidoreductase ppzC hydroxylates peramine to yield the newly identified compound 8-hydroxyperamine whereas ppzD converts L-proline into trans-4-hydroxy-L-proline, a precursor of peramine biosynthesis. This chain is Sulfatase ppz1, found in Metarhizium majus (strain ARSEF 297).